Consider the following 1407-residue polypeptide: MKFKKKNIYWVSPTKGVESMGCGLVKEFPCKDIGSIIDKITPNVSTIINLMEGVYRGNFSYLMTNFVILFKGEGRDKTIIDLEGRQRFTLCTISDIHFKDLTIKNGFGNAISGIFDGGAIYAYDSQIHFVNVALIDNTCSASGGGIFLYNCYFNVEHSLFQNNTANSGGGFILLLSASNITNSSFLHNRVFQEGKGGAIQVFISFMSIELSLFAYNIAPYSGAIDMVGGNLTSKYSKFIENHSNIGGGFGLYFISNVIFESCEFIGNRANSTGGLSFLTAQSMLRFSLCIFKDNFAPNCGIVESHSISPLLFESCSFTGDVPTAVQIALYDNYCFLKVQNCHFSEIQGVLMYADSISNIIIDSSSFTNVSNRIIDVGNEADILIISSTFYNITIDEYLVSLSNGNFLAYNMDFNNNIVLALIKSSVGGSVTIVSSSMSNNYVSTSLISLSNGYSVYIENCEVKNNTGLFKGCFIDTDHTGSETIVQSLFENNRSPFGPILYFSNPETMLSTNYSSNFRDILFSNNFAAYSGALVYFSQNVSLPNISCTNCIYDNNTAVFGELVNSAFYSFNVSITPVIYPFQDLIIEIFALDFFGNLVRGTSDLGFFAIPCSDAYVEGNLFAVLNENGSAIFSNIKLSSNPNSICNLTFLSVPIVSENGPITIPITFSYCSQDRELVMIKSIYYCLKTIKVTSFVKFLVGTLAAILLIILIISGFISLKYRKKRVIRYSNPLFLCIILVGCIIFLITIPVLFGSTSATCKIRFPIIVIGSCLVTSSVFIKQFRIWRLIKDIQLLRETNVENKYLLKFISILMVIPIIIVICSFFIFPTHEKYTFNQRDITITHYCSDGSYLAYVIIFLVYQMAILLFGCYLVIVCRKFRSIPGTFNEATYIGILIYNYTVVLIVAIPLAYVFNKNPLANFLIFSISIIVFVLSTIILLFIPKFHFLLRKKVIISSLEKLIKEQEAIVQRNKDILYFYDMYLAEERTGIQQQQRQGNLYNNNSLGRSISSNTRKRSNNNINNNNNNNSFNMTGFSDSSSTISNPNLTSFTSSPSSLNSSSDSDSTPDFNDPNFLEYYNERVKNYGKRKSIEKNKINNSIPNSPKSTTSLPTSLPSSSSSSSSSSSSSSSSSSSSSSSSSITPKSNTPILSPSSQSSKTINKGGSGSGNSSSIPNYQNIKSPNTPKSNKSSPNLSIPVNKNSKVSKLSSNQISSPKSIKSDKSPITIKDFDNSSDLSDSSNSLKSDSSIGSEQFNEKVINRIFNIHQDKKVKTTKQQSDSTLSSIGSDSSPNFNENINNPNINPNNNNNPNNNNNNNNNNNNNNNNNNNINNNNNNANNNNSDTDDSSPNFNENIEKKNVVKTKTNFLNQFHQKKQKDSDNRKNYNISPINISDEKVPPLSPINLSKRK.

At 1–696 the chain is on the extracellular side; sequence MKFKKKNIYW…KTIKVTSFVK (696 aa). Residues asparagine 43 and asparagine 58 are each glycosylated (N-linked (GlcNAc...) asparagine). PbH1 repeat units follow at residues 93-118 and 129-150; these read ISDI…FDGG and FVNV…FLYN. N-linked (GlcNAc...) asparagine glycosylation is found at asparagine 162, asparagine 179, asparagine 182, asparagine 230, asparagine 241, asparagine 270, asparagine 368, asparagine 391, asparagine 464, asparagine 512, asparagine 539, asparagine 544, asparagine 554, asparagine 571, asparagine 627, and asparagine 646. One copy of the PbH1 3 repeat lies at 254-279; sequence ISNVIFESCEFIGNRANSTGGLSFLT. A PbH1 4 repeat occupies 452–476; it reads GYSVYIENCEVKNNTGLFKGCFIDT. A helical transmembrane segment spans residues 697-717; that stretch reads FLVGTLAAILLIILIISGFIS. The Cytoplasmic portion of the chain corresponds to 718 to 731; it reads LKYRKKRVIRYSNP. Residues 732-752 form a helical membrane-spanning segment; that stretch reads LFLCIILVGCIIFLITIPVLF. The Extracellular portion of the chain corresponds to 753 to 758; it reads GSTSAT. A helical membrane pass occupies residues 759 to 779; sequence CKIRFPIIVIGSCLVTSSVFI. Topologically, residues 780–806 are cytoplasmic; the sequence is KQFRIWRLIKDIQLLRETNVENKYLLK. The chain crosses the membrane as a helical span at residues 807 to 827; it reads FISILMVIPIIIVICSFFIFP. The Extracellular segment spans residues 828–853; that stretch reads THEKYTFNQRDITITHYCSDGSYLAY. Residues 854 to 874 form a helical membrane-spanning segment; that stretch reads VIIFLVYQMAILLFGCYLVIV. Residues 875-890 lie on the Cytoplasmic side of the membrane; that stretch reads CRKFRSIPGTFNEATY. A helical membrane pass occupies residues 891 to 911; it reads IGILIYNYTVVLIVAIPLAYV. Residues 912–919 are Extracellular-facing; the sequence is FNKNPLAN. Residues 920-940 traverse the membrane as a helical segment; sequence FLIFSISIIVFVLSTIILLFI. At 941–1407 the chain is on the cytoplasmic side; that stretch reads PKFHFLLRKK…LSPINLSKRK (467 aa). Polar residues predominate over residues 991–1004; the sequence is QQRQGNLYNNNSLG. Disordered stretches follow at residues 991–1072, 1084–1248, 1267–1351, and 1369–1407; these read QQRQ…DPNF, GKRK…SSIG, KKVK…NFNE, and FHQK…SKRK. The segment covering 1005–1029 has biased composition (low complexity); that stretch reads RSISSNTRKRSNNNINNNNNNNSFN. Positions 1030-1040 are enriched in polar residues; the sequence is MTGFSDSSSTI. A compositionally biased stretch (low complexity) spans 1041–1071; the sequence is SNPNLTSFTSSPSSLNSSSDSDSTPDFNDPN. Residues 1084 to 1093 show a composition bias toward basic and acidic residues; the sequence is GKRKSIEKNK. Composition is skewed to low complexity over residues 1099–1147, 1154–1246, and 1276–1339; these read PNSP…NTPI, SSKT…SDSS, and SDST…NNNN. Positions 1315–1344 form a coiled coil; sequence NNNNNNNNNNNNNINNNNNNANNNNSDTDD.

This sequence belongs to the G-protein coupled receptor 3 family. GABA-B receptor subfamily.

It localises to the membrane. The chain is Metabotropic glutamate receptor-like protein P (grlP) from Dictyostelium discoideum (Social amoeba).